A 345-amino-acid chain; its full sequence is Protein RecA (345 aa).

68 to 75 serves as a coordination point for ATP; the sequence is GVESSGKT.

This sequence belongs to the RecA family.

It localises to the cytoplasm. In terms of biological role, can catalyze the hydrolysis of ATP in the presence of single-stranded DNA, the ATP-dependent uptake of single-stranded DNA by duplex DNA, and the ATP-dependent hybridization of homologous single-stranded DNAs. It interacts with LexA causing its activation and leading to its autocatalytic cleavage. This chain is Protein RecA, found in Aquifex aeolicus (strain VF5).